A 721-amino-acid polypeptide reads, in one-letter code: Polyribonucleotide nucleotidyltransferase (721 aa).

Residues D490 and D496 each contribute to the Mg(2+) site. A KH domain is found at 557–618 (PRILTLKINP…EAVRQKIEGL (62 aa)). The 69-residue stretch at 625–693 (GEEYEGTVVK…DRGKIDLIRP (69 aa)) folds into the S1 motif domain. The interval 696–721 (EGKIAPREPRAARAGGDRGGRPPRRE) is disordered.

This sequence belongs to the polyribonucleotide nucleotidyltransferase family. Mg(2+) serves as cofactor.

The protein resides in the cytoplasm. The catalysed reaction is RNA(n+1) + phosphate = RNA(n) + a ribonucleoside 5'-diphosphate. Its function is as follows. Involved in mRNA degradation. Catalyzes the phosphorolysis of single-stranded polyribonucleotides processively in the 3'- to 5'-direction. This is Polyribonucleotide nucleotidyltransferase from Deinococcus geothermalis (strain DSM 11300 / CIP 105573 / AG-3a).